The sequence spans 338 residues: Ketol-acid reductoisomerase (NADP(+)) (338 aa).

One can recognise a KARI N-terminal Rossmann domain in the interval 1–181; that stretch reads MKVFYDKDCD…GGGKAGIIET (181 aa). NADP(+) is bound by residues 24-27, Arg47, and Ser52; that span reads YGSQ. His107 is an active-site residue. An NADP(+)-binding site is contributed by Gly133. Residues 182 to 327 enclose the KARI C-terminal knotted domain; it reads NFREETETDL…EKLRAMMPWI (146 aa). Mg(2+) contacts are provided by Asp190, Glu194, Glu226, and Glu230. A substrate-binding site is contributed by Ser251.

It belongs to the ketol-acid reductoisomerase family. The cofactor is Mg(2+).

The catalysed reaction is (2R)-2,3-dihydroxy-3-methylbutanoate + NADP(+) = (2S)-2-acetolactate + NADPH + H(+). It catalyses the reaction (2R,3R)-2,3-dihydroxy-3-methylpentanoate + NADP(+) = (S)-2-ethyl-2-hydroxy-3-oxobutanoate + NADPH + H(+). It functions in the pathway amino-acid biosynthesis; L-isoleucine biosynthesis; L-isoleucine from 2-oxobutanoate: step 2/4. The protein operates within amino-acid biosynthesis; L-valine biosynthesis; L-valine from pyruvate: step 2/4. In terms of biological role, involved in the biosynthesis of branched-chain amino acids (BCAA). Catalyzes an alkyl-migration followed by a ketol-acid reduction of (S)-2-acetolactate (S2AL) to yield (R)-2,3-dihydroxy-isovalerate. In the isomerase reaction, S2AL is rearranged via a Mg-dependent methyl migration to produce 3-hydroxy-3-methyl-2-ketobutyrate (HMKB). In the reductase reaction, this 2-ketoacid undergoes a metal-dependent reduction by NADPH to yield (R)-2,3-dihydroxy-isovalerate. The sequence is that of Ketol-acid reductoisomerase (NADP(+)) from Polaromonas sp. (strain JS666 / ATCC BAA-500).